A 176-amino-acid polypeptide reads, in one-letter code: MKPIIEQKAKVVAEIEEMIKSSQAAILVDYRGLTVAEMTELRRKLKEKGAEIKVVKNTLAKRAAHNLGITGLDPYLEGPTALAVAKEDPASAAKVLFDFAKDHPNLEIKVGILENIVLEKDQVKAIADLPPRNVLLAKLLGGMQAPLYGFAGALAGMLRKFVYALEAIRKQKAGEE.

Belongs to the universal ribosomal protein uL10 family. As to quaternary structure, part of the ribosomal stalk of the 50S ribosomal subunit. The N-terminus interacts with L11 and the large rRNA to form the base of the stalk. The C-terminus forms an elongated spine to which L12 dimers bind in a sequential fashion forming a multimeric L10(L12)X complex.

In terms of biological role, forms part of the ribosomal stalk, playing a central role in the interaction of the ribosome with GTP-bound translation factors. The sequence is that of Large ribosomal subunit protein uL10 from Carboxydothermus hydrogenoformans (strain ATCC BAA-161 / DSM 6008 / Z-2901).